We begin with the raw amino-acid sequence, 156 residues long: ATP synthase subunit b (156 aa).

The helical transmembrane segment at 12–32 threads the bilayer; it reads VAFFIFVLFCMKFVWPPVIAA.

Belongs to the ATPase B chain family. F-type ATPases have 2 components, F(1) - the catalytic core - and F(0) - the membrane proton channel. F(1) has five subunits: alpha(3), beta(3), gamma(1), delta(1), epsilon(1). F(0) has three main subunits: a(1), b(2) and c(10-14). The alpha and beta chains form an alternating ring which encloses part of the gamma chain. F(1) is attached to F(0) by a central stalk formed by the gamma and epsilon chains, while a peripheral stalk is formed by the delta and b chains.

Its subcellular location is the cell inner membrane. Functionally, f(1)F(0) ATP synthase produces ATP from ADP in the presence of a proton or sodium gradient. F-type ATPases consist of two structural domains, F(1) containing the extramembraneous catalytic core and F(0) containing the membrane proton channel, linked together by a central stalk and a peripheral stalk. During catalysis, ATP synthesis in the catalytic domain of F(1) is coupled via a rotary mechanism of the central stalk subunits to proton translocation. Its function is as follows. Component of the F(0) channel, it forms part of the peripheral stalk, linking F(1) to F(0). The sequence is that of ATP synthase subunit b from Pseudomonas aeruginosa (strain UCBPP-PA14).